We begin with the raw amino-acid sequence, 279 residues long: Dermonecrotic toxin LspiSicTox-betaIE3i (279 aa).

Residue H5 is part of the active site. Residues E25 and D27 each coordinate Mg(2+). H41 serves as the catalytic Nucleophile. 2 disulfide bridges follow: C45-C51 and C47-C190. A Mg(2+)-binding site is contributed by D85.

The protein belongs to the arthropod phospholipase D family. Class II subfamily. The cofactor is Mg(2+). Expressed by the venom gland.

The protein localises to the secreted. The enzyme catalyses an N-(acyl)-sphingosylphosphocholine = an N-(acyl)-sphingosyl-1,3-cyclic phosphate + choline. It carries out the reaction an N-(acyl)-sphingosylphosphoethanolamine = an N-(acyl)-sphingosyl-1,3-cyclic phosphate + ethanolamine. It catalyses the reaction a 1-acyl-sn-glycero-3-phosphocholine = a 1-acyl-sn-glycero-2,3-cyclic phosphate + choline. The catalysed reaction is a 1-acyl-sn-glycero-3-phosphoethanolamine = a 1-acyl-sn-glycero-2,3-cyclic phosphate + ethanolamine. In terms of biological role, dermonecrotic toxins cleave the phosphodiester linkage between the phosphate and headgroup of certain phospholipids (sphingolipid and lysolipid substrates), forming an alcohol (often choline) and a cyclic phosphate. This toxin acts on sphingomyelin (SM). It may also act on ceramide phosphoethanolamine (CPE), lysophosphatidylcholine (LPC) and lysophosphatidylethanolamine (LPE), but not on lysophosphatidylserine (LPS), and lysophosphatidylglycerol (LPG). It acts by transphosphatidylation, releasing exclusively cyclic phosphate products as second products. Induces dermonecrosis, hemolysis, increased vascular permeability, edema, inflammatory response, and platelet aggregation. The chain is Dermonecrotic toxin LspiSicTox-betaIE3i from Loxosceles spinulosa (Recluse spider).